The chain runs to 369 residues: Capsid protein (369 aa).

It localises to the host nucleus. The protein localises to the virion. Self-assembles to form the virion icosahedral capsid. The protein is Capsid protein of Avon-Heathcote Estuary associated kieseladnavirus (AHEaBV).